The following is a 429-amino-acid chain: Ribosomal RNA small subunit methyltransferase B (429 aa).

Residues 254–260 (CAAPGGK), Asp-277, Asp-303, and Asp-322 each bind S-adenosyl-L-methionine. Cys-375 functions as the Nucleophile in the catalytic mechanism.

The protein belongs to the class I-like SAM-binding methyltransferase superfamily. RsmB/NOP family.

The protein resides in the cytoplasm. It catalyses the reaction cytidine(967) in 16S rRNA + S-adenosyl-L-methionine = 5-methylcytidine(967) in 16S rRNA + S-adenosyl-L-homocysteine + H(+). Specifically methylates the cytosine at position 967 (m5C967) of 16S rRNA. This chain is Ribosomal RNA small subunit methyltransferase B, found in Escherichia coli (strain UTI89 / UPEC).